The following is a 346-amino-acid chain: Ribonucleoside-diphosphate reductase subunit beta (346 aa).

The Fe cation site is built by Glu89, Glu120, and His123. The active site involves Tyr129. 3 residues coordinate Fe cation: Glu193, Glu227, and His230.

It belongs to the ribonucleoside diphosphate reductase small chain family. As to quaternary structure, tetramer of two alpha and two beta subunits. Fe cation is required as a cofactor.

The catalysed reaction is a 2'-deoxyribonucleoside 5'-diphosphate + [thioredoxin]-disulfide + H2O = a ribonucleoside 5'-diphosphate + [thioredoxin]-dithiol. Provides the precursors necessary for DNA synthesis. Catalyzes the biosynthesis of deoxyribonucleotides from the corresponding ribonucleotides. This is Ribonucleoside-diphosphate reductase subunit beta (nrdB) from Chlamydia pneumoniae (Chlamydophila pneumoniae).